Reading from the N-terminus, the 148-residue chain is Putative nickel-responsive regulator (148 aa).

His88, His99, His101, and Cys107 together coordinate Ni(2+).

This sequence belongs to the transcriptional regulatory CopG/NikR family. The cofactor is Ni(2+).

Functionally, transcriptional regulator. In Helicobacter pylori (strain G27), this protein is Putative nickel-responsive regulator.